The primary structure comprises 628 residues: Glutamyl-tRNA(Gln) amidotransferase subunit E (628 aa).

It belongs to the GatB/GatE family. GatE subfamily. In terms of assembly, heterodimer of GatD and GatE.

The enzyme catalyses L-glutamyl-tRNA(Gln) + L-glutamine + ATP + H2O = L-glutaminyl-tRNA(Gln) + L-glutamate + ADP + phosphate + H(+). Its function is as follows. Allows the formation of correctly charged Gln-tRNA(Gln) through the transamidation of misacylated Glu-tRNA(Gln) in organisms which lack glutaminyl-tRNA synthetase. The reaction takes place in the presence of glutamine and ATP through an activated gamma-phospho-Glu-tRNA(Gln). The GatDE system is specific for glutamate and does not act on aspartate. The protein is Glutamyl-tRNA(Gln) amidotransferase subunit E of Pyrococcus furiosus (strain ATCC 43587 / DSM 3638 / JCM 8422 / Vc1).